The sequence spans 341 residues: Phosphate acyltransferase (341 aa).

It belongs to the PlsX family. In terms of assembly, homodimer. Probably interacts with PlsY.

The protein resides in the cytoplasm. The catalysed reaction is a fatty acyl-[ACP] + phosphate = an acyl phosphate + holo-[ACP]. Its pathway is lipid metabolism; phospholipid metabolism. In terms of biological role, catalyzes the reversible formation of acyl-phosphate (acyl-PO(4)) from acyl-[acyl-carrier-protein] (acyl-ACP). This enzyme utilizes acyl-ACP as fatty acyl donor, but not acyl-CoA. This is Phosphate acyltransferase from Ehrlichia ruminantium (strain Gardel).